The primary structure comprises 551 residues: Histone-lysine N-methyltransferase SETDB2 (551 aa).

The 65-residue stretch at 146 to 210 folds into the MBD domain; that stretch reads LLGHNPLRAP…DRFSFSTQVC (65 aa). Residues 269 to 329 enclose the Pre-SET domain; sequence VCCDCTDGCT…RCENRVVQKG (61 aa). Positions 271, 273, 277, 283, 285, 310, 314, 316, and 321 each coordinate Zn(2+). An SET domain is found at 332 to 537; the sequence is VRLQVFRTPE…AGTELTWSCT (206 aa). Residue 342-344 participates in S-adenosyl-L-methionine binding; that stretch reads HMW. A disordered region spans residues 426–447; the sequence is SLAQRRDQQQFSISSETEDNRC. S-adenosyl-L-methionine contacts are provided by residues Arg-491 and 494-495; that span reads TH.

It belongs to the class V-like SAM-binding methyltransferase superfamily.

The protein resides in the nucleus. It is found in the chromosome. It carries out the reaction N(6),N(6)-dimethyl-L-lysyl(9)-[histone H3] + S-adenosyl-L-methionine = N(6),N(6),N(6)-trimethyl-L-lysyl(9)-[histone H3] + S-adenosyl-L-homocysteine + H(+). Its function is as follows. Histone methyltransferase involved in left-right axis specification in early development and mitosis. Specifically trimethylates 'Lys-9' of histone H3 (H3K9me3). H3K9me3 represents a specific tag for epigenetic transcriptional repression by recruiting HP1 (CBX1, CBX3 and/or CBX5) proteins to methylated histones. Contributes to H3K9me3 in both the interspersed repetitive elements and centromere-associated repeats. Plays a role in chromosome condensation and segregation during mitosis. During early development, required to specify the left-right axis by repressing expression of FGF8, leading to negatively regulate the dorsal organizer formation. This chain is Histone-lysine N-methyltransferase SETDB2 (setdb2), found in Danio rerio (Zebrafish).